Here is a 119-residue protein sequence, read N- to C-terminus: Large ribosomal subunit protein uL24 (119 aa).

This sequence belongs to the universal ribosomal protein uL24 family. Part of the 50S ribosomal subunit.

Functionally, one of two assembly initiator proteins, it binds directly to the 5'-end of the 23S rRNA, where it nucleates assembly of the 50S subunit. Located at the polypeptide exit tunnel on the outside of the subunit. The protein is Large ribosomal subunit protein uL24 of Haloquadratum walsbyi (strain DSM 16790 / HBSQ001).